A 602-amino-acid polypeptide reads, in one-letter code: Aspartate--tRNA(Asp/Asn) ligase (602 aa).

E175 serves as a coordination point for L-aspartate. An aspartate region spans residues 199-202; it reads QIFK. R221 serves as a coordination point for L-aspartate. ATP contacts are provided by residues 221 to 223 and Q230; that span reads RDE. H458 serves as a coordination point for L-aspartate. An ATP-binding site is contributed by E492. R499 lines the L-aspartate pocket. 544 to 547 contacts ATP; that stretch reads GLDR.

Belongs to the class-II aminoacyl-tRNA synthetase family. Type 1 subfamily. As to quaternary structure, homodimer.

It localises to the cytoplasm. The catalysed reaction is tRNA(Asx) + L-aspartate + ATP = L-aspartyl-tRNA(Asx) + AMP + diphosphate. Aspartyl-tRNA synthetase with relaxed tRNA specificity since it is able to aspartylate not only its cognate tRNA(Asp) but also tRNA(Asn). Reaction proceeds in two steps: L-aspartate is first activated by ATP to form Asp-AMP and then transferred to the acceptor end of tRNA(Asp/Asn). The protein is Aspartate--tRNA(Asp/Asn) ligase of Cupriavidus necator (strain ATCC 17699 / DSM 428 / KCTC 22496 / NCIMB 10442 / H16 / Stanier 337) (Ralstonia eutropha).